The chain runs to 514 residues: 1-pyrroline-5-carboxylate dehydrogenase (514 aa).

Catalysis depends on residues glutamate 286 and cysteine 320.

It belongs to the aldehyde dehydrogenase family. RocA subfamily.

It catalyses the reaction L-glutamate 5-semialdehyde + NAD(+) + H2O = L-glutamate + NADH + 2 H(+). It participates in amino-acid degradation; L-proline degradation into L-glutamate; L-glutamate from L-proline: step 2/2. This chain is 1-pyrroline-5-carboxylate dehydrogenase, found in Staphylococcus epidermidis (strain ATCC 12228 / FDA PCI 1200).